The sequence spans 263 residues: Achaete-scute homolog 2 (263 aa).

Disordered regions lie at residues 104-126 (RRRRSGATEASSSSAAVARRNER) and 194-248 (PPSD…ELSP). Low complexity-rich tracts occupy residues 110-121 (ATEASSSSAAVA), 202-220 (PSASPASASLSCASTSPSP), and 230-247 (SPRSAYSSEESSCEGELS). The 53-residue stretch at 118-170 (AAVARRNERERNRVKLVNLGFQALRQHVPHGGANKKLSKVETLRSAVEYIRAL) folds into the bHLH domain.

In terms of assembly, efficient DNA binding requires dimerization with another basic helix-loop-helix (bHLH) protein. Forms heterodimers with bHLH transcription factor TCF3. May not heterodimerise with bHLH protein HAND1. As to expression, expressed in follicular T-helper (Tfh) cells.

The protein resides in the nucleus. Transcription factor. Binds to E-box motifs 5'-CANNTG-3' in the regulatory elements of target genes, probably as a heterodimer with another basic helix-loop-helix (bHLH) protein such as the transcription factor TCF3. May bind both open and closed chromatin, acting as a pioneer transcription factor to allow other factors to bind and activate lineage-specific genes. Required during post-implantation development for the generation of some differentiated trophoblast cell types. Transcriptional activity of ASCL2 may be antagonised in a subset of trophoblast cells by bHLH transcription factor HAND1, perhaps by competing for dimerization with other bHLH proteins. Involved in differentiation and function of follicular T-helper (Tfh) cells, thereby playing a role in germinal center responses; probably modulates expression of genes involved in Tfh cell function, such as BCL6. May also act as a suppressor of Th1-, Th2- and Th17-cell differentiation. Induces the formation of stem cells in intestinal crypts in vitro, synergistically activating transcription of target genes, such as SOX9, together with TCF4/beta-catenin. May form a bistable transcriptional switch, controlling expression of its own gene together with Wnt/R-spondin signaling, and thereby maintaining stem cell characteristics. Modulates expression of target genes, including perhaps down-regulating EGR1/Krox24 and chemokine CXCL10/Mob-1 and up-regulating CXCR4 and CDKN1C/p57kip2, in Schwann cells. May play a role in reducing proliferation of Schwann cells, perhaps acting via modulation of expression of CDKN1C. May be dispensable for blastocyst formation and later embryonic function. May be involved in the determination of neuronal precursors. The polypeptide is Achaete-scute homolog 2 (Ascl2) (Mus musculus (Mouse)).